Reading from the N-terminus, the 220-residue chain is MKLILRGIANEFIKSFSFKNFEIDQNFFDKLITKEAPAAANLITENEKINSYELAKLKLILEKHFIKLSNIYSNNRETVLSGKSLKINSTFLKIKDLENQLPLDPSYLKKDILHKGTVRSGDRISSNGDLFIIGDVNPGAIISANNNVYVWGKLFGIAFAGKNGNKNASVASLYLNPLQLRICEIVAIGPKEKPKGQHPEIAILEDNKIIIKPYFLNQNL.

This sequence belongs to the MinC family. Interacts with MinD and FtsZ.

Cell division inhibitor that blocks the formation of polar Z ring septums. Rapidly oscillates between the poles of the cell to destabilize FtsZ filaments that have formed before they mature into polar Z rings. Prevents FtsZ polymerization. This is Probable septum site-determining protein MinC from Prochlorococcus marinus subsp. pastoris (strain CCMP1986 / NIES-2087 / MED4).